The primary structure comprises 427 residues: Transcriptional enhancer factor TEF-3 (427 aa).

A disordered region spans residues 1–32; it reads MTSNEWSSPDSPEGSSISGGSQALDKPIDNDA. Residues 7–21 are compositionally biased toward low complexity; the sequence is SSPDSPEGSSISGGS. The TEA DNA-binding region spans 29 to 105; the sequence is DNDAEGVWSP…QVLARRKARE (77 aa). The short motif at 78 to 94 is the Nuclear localization signal element; that stretch reads IKLRTGKTRTRKQVSSH. The disordered stretch occupies residues 163–206; the sequence is QPGTSHDVKPFSQNTYPVQPPLPLPGFESPAGPTPSPSAPLAPP. A compositionally biased stretch (pro residues) spans 194–205; the sequence is GPTPSPSAPLAP.

Interacts with WWTR1/TAZ. Interacts with YAP1. In terms of tissue distribution, preferentially expressed in lung and in skeletal muscle.

The protein resides in the nucleus. Its function is as follows. Transcription factor which plays a key role in the Hippo signaling pathway, a pathway involved in organ size control and tumor suppression by restricting proliferation and promoting apoptosis. The core of this pathway is composed of a kinase cascade wherein MST1/MST2, in complex with its regulatory protein SAV1, phosphorylates and activates LATS1/2 in complex with its regulatory protein MOB1, which in turn phosphorylates and inactivates YAP1 oncoprotein and WWTR1/TAZ. Acts by mediating gene expression of YAP1 and WWTR1/TAZ, thereby regulating cell proliferation, migration and epithelial mesenchymal transition (EMT) induction. Binds specifically and non-cooperatively to the Sph and GT-IIC 'enhansons' (5'-GTGGAATGT-3') and activates transcription. Binds to the M-CAT motif. Might play a role in the embryonic development of skeletal muscle. The chain is Transcriptional enhancer factor TEF-3 (Tead4) from Mus musculus (Mouse).